A 359-amino-acid polypeptide reads, in one-letter code: Small ribosomal subunit biogenesis GTPase RsgA (359 aa).

Positions 101–259 (KRKGSQAIAS…LMDNPGIREV (159 aa)) constitute a CP-type G domain. Residues 149-152 (NKKD) and 201-209 (GSSGAGKST) each bind GTP. Cys-284, Cys-289, His-291, and Cys-297 together coordinate Zn(2+). A disordered region spans residues 331–359 (DPEEARKKKQKDKQMSKALQKRLKDKGRK). The span at 349–359 (LQKRLKDKGRK) shows a compositional bias: basic residues.

The protein belongs to the TRAFAC class YlqF/YawG GTPase family. RsgA subfamily. As to quaternary structure, monomer. Associates with 30S ribosomal subunit, binds 16S rRNA. It depends on Zn(2+) as a cofactor.

Its subcellular location is the cytoplasm. Its function is as follows. One of several proteins that assist in the late maturation steps of the functional core of the 30S ribosomal subunit. Helps release RbfA from mature subunits. May play a role in the assembly of ribosomal proteins into the subunit. Circularly permuted GTPase that catalyzes slow GTP hydrolysis, GTPase activity is stimulated by the 30S ribosomal subunit. This chain is Small ribosomal subunit biogenesis GTPase RsgA, found in Leptospira interrogans serogroup Icterohaemorrhagiae serovar Lai (strain 56601).